The chain runs to 218 residues: Methylthioribulose-1-phosphate dehydratase (218 aa).

Histidine 107 and histidine 109 together coordinate Zn(2+).

It belongs to the aldolase class II family. MtnB subfamily. Requires Zn(2+) as cofactor.

It catalyses the reaction 5-(methylsulfanyl)-D-ribulose 1-phosphate = 5-methylsulfanyl-2,3-dioxopentyl phosphate + H2O. It functions in the pathway amino-acid biosynthesis; L-methionine biosynthesis via salvage pathway; L-methionine from S-methyl-5-thio-alpha-D-ribose 1-phosphate: step 2/6. Functionally, catalyzes the dehydration of methylthioribulose-1-phosphate (MTRu-1-P) into 2,3-diketo-5-methylthiopentyl-1-phosphate (DK-MTP-1-P). This is Methylthioribulose-1-phosphate dehydratase from Xylella fastidiosa (strain Temecula1 / ATCC 700964).